Consider the following 420-residue polypeptide: Transcription factor dbaG (420 aa).

The protein localises to the nucleus. In terms of biological role, transcription factor that coregulates the expression of the gene cluster that mediates the biosynthesis of the antibiotic 2,4- dihydroxy-3-methyl-6-(2-oxopropyl)benzaldehyde (DHMBA) and its derivatives. Specifically positively regulates the expression of the FAD-dependent oxidoreductase dbaF. The chain is Transcription factor dbaG from Emericella nidulans (strain FGSC A4 / ATCC 38163 / CBS 112.46 / NRRL 194 / M139) (Aspergillus nidulans).